The following is a 495-amino-acid chain: Tripartite motif-containing protein 5 (495 aa).

Ala2 bears the N-acetylalanine mark. The segment at 15–60 (CPICLELLTEPLSLHCGHSFCQACITANHKKSMLYKEGERSCPVCR) adopts an RING-type zinc-finger fold. A Phosphoserine modification is found at Ser87. A B box-type zinc finger spans residues 92 to 133 (QKVDHCARHGEKLLLFCQEDRKVICWLCERSQEHRGHHTFLM). Cys97, His100, Cys119, and His125 together coordinate Zn(2+). A coiled-coil region spans residues 137-225 (AQEYHVKLQT…LTKSETEMVQ (89 aa)). The segment at 187 to 200 (FEQLREILDWEESN) is required for interaction with GABARAP and for autophagy. The B30.2/SPRY domain occupies 283-495 (LKGMLDMFRE…VPMTLCSPSS (213 aa)).

It belongs to the TRIM/RBCC family. Can form homodimers and homotrimers. In addition to lower-order dimerization, also exhibits a higher-order multimerization and both low- and high-order multimerizations are essential for its restriction activity. Interacts with BTBD1 and BTBD2. Interacts with PSMC4, PSMC5, PSMD7 and HSPA8/HSC70. Interacts (via B30.2/SPRY domain) with HSPA1A/B. Interacts with PSMC2, MAP3K7/TAK1, TAB2 and TAB3. Interacts with SQSTM1. Interacts with TRIM6 and TRIM34. Interacts with ULK1 (phosphorylated form), GABARAP, GABARAPL1, GABARAPL2, MAP1LC3A, MAP1LC3C and BECN1. Degraded in a proteasome-independent fashion in the absence of viral infection but in a proteasome-dependent fashion following exposure to restriction sensitive virus. Post-translationally, autoubiquitinated in a RING finger- and UBE2D2-dependent manner. Monoubiquitinated by TRIM21. Deubiquitinated by Yersinia YopJ. Ubiquitination may not lead to proteasomal degradation.

It is found in the cytoplasm. The protein resides in the nucleus. The catalysed reaction is S-ubiquitinyl-[E2 ubiquitin-conjugating enzyme]-L-cysteine + [acceptor protein]-L-lysine = [E2 ubiquitin-conjugating enzyme]-L-cysteine + N(6)-ubiquitinyl-[acceptor protein]-L-lysine.. The protein operates within protein modification; protein ubiquitination. Its function is as follows. Capsid-specific restriction factor that prevents infection from non-host-adapted retroviruses. Blocks viral replication early in the life cycle, after viral entry but before reverse transcription. In addition to acting as a capsid-specific restriction factor, also acts as a pattern recognition receptor that activates innate immune signaling in response to the retroviral capsid lattice. Binding to the viral capsid triggers its E3 ubiquitin ligase activity, and in concert with the heterodimeric ubiquitin conjugating enzyme complex UBE2V1-UBE2N (also known as UBC13-UEV1A complex) generates 'Lys-63'-linked polyubiquitin chains, which in turn are catalysts in the autophosphorylation of the MAP3K7/TAK1 complex (includes TAK1, TAB2, and TAB3). Activation of the MAP3K7/TAK1 complex by autophosphorylation results in the induction and expression of NF-kappa-B and MAPK-responsive inflammatory genes, thereby leading to an innate immune response in the infected cell. Plays a role in regulating autophagy through activation of autophagy regulator BECN1 by causing its dissociation from its inhibitors BCL2 and TAB2. This is Tripartite motif-containing protein 5 (TRIM5) from Colobus guereza (Mantled guereza).